The primary structure comprises 287 residues: Endolytic peptidoglycan transglycosylase RlpA (287 aa).

Positions 1 to 25 (MKLKTGLNLTALLLFMISVAFPAQA) are cleaved as a signal peptide. One can recognise an SPOR domain in the interval 209–284 (LKGTEFYCLK…ANNKPLIVYT (76 aa)).

This sequence belongs to the RlpA family.

Its function is as follows. Lytic transglycosylase with a strong preference for naked glycan strands that lack stem peptides. This Haemophilus influenzae (strain ATCC 51907 / DSM 11121 / KW20 / Rd) protein is Endolytic peptidoglycan transglycosylase RlpA.